We begin with the raw amino-acid sequence, 301 residues long: Diaminopimelate epimerase (301 aa).

Positions 15, 47, and 67 each coordinate substrate. The active-site Proton donor is the cysteine 76. Substrate is bound by residues 77–78 (GN), asparagine 163, asparagine 197, and 215–216 (ER). Cysteine 224 serves as the catalytic Proton acceptor. 225–226 (GS) contacts substrate.

The protein belongs to the diaminopimelate epimerase family. In terms of assembly, homodimer.

Its subcellular location is the cytoplasm. It carries out the reaction (2S,6S)-2,6-diaminopimelate = meso-2,6-diaminopimelate. It participates in amino-acid biosynthesis; L-lysine biosynthesis via DAP pathway; DL-2,6-diaminopimelate from LL-2,6-diaminopimelate: step 1/1. Its function is as follows. Catalyzes the stereoinversion of LL-2,6-diaminopimelate (L,L-DAP) to meso-diaminopimelate (meso-DAP), a precursor of L-lysine and an essential component of the bacterial peptidoglycan. This chain is Diaminopimelate epimerase, found in Rhizobium etli (strain ATCC 51251 / DSM 11541 / JCM 21823 / NBRC 15573 / CFN 42).